The following is a 289-amino-acid chain: (3R)-3-[(carboxymethyl)amino]fatty acid oxygenase/decarboxylase (289 aa).

A (3R)-3-[(carboxymethyl)amino]fatty acid-binding residues include tyrosine 65, tyrosine 70, and glycine 93. Positions 97 and 99 each coordinate Fe(2+). 2 residues coordinate a (3R)-3-[(carboxymethyl)amino]fatty acid: tyrosine 100 and lysine 158. Residue histidine 260 participates in Fe(2+) binding. Histidine 264 lines the 2-oxoglutarate pocket. Residue arginine 275 participates in a (3R)-3-[(carboxymethyl)amino]fatty acid binding.

The protein belongs to the TfdA dioxygenase family. Fe(2+) serves as cofactor.

The enzyme catalyses a (3R)-3-[(carboxymethyl)amino]fatty acid + 2 2-oxoglutarate + 2 O2 = a (3R)-3-isocyanyl-fatty acid + 2 succinate + 3 CO2 + 2 H2O. It catalyses the reaction a (3R)-3-[(carboxymethyl)amino]fatty acid + 2-oxoglutarate + O2 = a (3R)-3-{[carboxy(hydroxy)methyl]amino}fatty acid + succinate + CO2. It carries out the reaction a (3R)-3-{[carboxy(hydroxy)methyl]amino}fatty acid + 2-oxoglutarate + O2 = a (3R)-3-isocyanyl-fatty acid + succinate + 2 CO2 + 2 H2O. Its function is as follows. Involved in the biosynthesis of a unique class of isonitrile lipopeptides (INLPs) that seem to play a role in metal acquisition. Catalyzes the conversion of (3R)-3-[(carboxymethyl)amino]fatty acids to (3R)-3-isocyanyl-fatty acids through an oxidative decarboxylation mechanism, thereby generating the isonitrile group of INLPs. The chain is (3R)-3-[(carboxymethyl)amino]fatty acid oxygenase/decarboxylase from Mycobacterium bovis (strain ATCC BAA-935 / AF2122/97).